We begin with the raw amino-acid sequence, 136 residues long: Crossover junction endodeoxyribonuclease Hjc (136 aa).

Glutamate 9 provides a ligand contact to Mg(2+). Serine 29 is a catalytic residue. Mg(2+)-binding residues include aspartate 38 and glutamate 51.

It belongs to the Holliday junction resolvase Hjc family. In terms of assembly, homodimer. The cofactor is Mg(2+).

It catalyses the reaction Endonucleolytic cleavage at a junction such as a reciprocal single-stranded crossover between two homologous DNA duplexes (Holliday junction).. In terms of biological role, a structure-specific endonuclease that resolves Holliday junction (HJ) intermediates during genetic recombination. Cleaves 4-way DNA junctions introducing paired nicks in opposing strands, leaving a 5'-terminal phosphate and a 3'-terminal hydroxyl group that are subsequently ligated to produce recombinant products. This Archaeoglobus fulgidus (strain ATCC 49558 / DSM 4304 / JCM 9628 / NBRC 100126 / VC-16) protein is Crossover junction endodeoxyribonuclease Hjc.